The sequence spans 455 residues: UDP-N-acetylmuramoylalanine--D-glutamate ligase (455 aa).

119–125 contributes to the ATP binding site; the sequence is GTNGKTT.

It belongs to the MurCDEF family.

It localises to the cytoplasm. The catalysed reaction is UDP-N-acetyl-alpha-D-muramoyl-L-alanine + D-glutamate + ATP = UDP-N-acetyl-alpha-D-muramoyl-L-alanyl-D-glutamate + ADP + phosphate + H(+). Its pathway is cell wall biogenesis; peptidoglycan biosynthesis. In terms of biological role, cell wall formation. Catalyzes the addition of glutamate to the nucleotide precursor UDP-N-acetylmuramoyl-L-alanine (UMA). In Listeria monocytogenes serovar 1/2a (strain ATCC BAA-679 / EGD-e), this protein is UDP-N-acetylmuramoylalanine--D-glutamate ligase.